A 255-amino-acid chain; its full sequence is Geranylgeranylglyceryl phosphate synthase (255 aa).

Mg(2+) contacts are provided by aspartate 34 and threonine 64. Residues 182–188 (YLEAGSG), 213–214 (GG), and 235–236 (GN) each bind sn-glycerol 1-phosphate.

It belongs to the GGGP/HepGP synthase family. Group II subfamily. Requires Mg(2+) as cofactor.

The protein localises to the cytoplasm. It catalyses the reaction sn-glycerol 1-phosphate + (2E,6E,10E)-geranylgeranyl diphosphate = sn-3-O-(geranylgeranyl)glycerol 1-phosphate + diphosphate. Its pathway is membrane lipid metabolism; glycerophospholipid metabolism. Functionally, prenyltransferase that catalyzes the transfer of the geranylgeranyl moiety of geranylgeranyl diphosphate (GGPP) to the C3 hydroxyl of sn-glycerol-1-phosphate (G1P). This reaction is the first ether-bond-formation step in the biosynthesis of archaeal membrane lipids. The sequence is that of Geranylgeranylglyceryl phosphate synthase from Saccharolobus islandicus (strain M.14.25 / Kamchatka #1) (Sulfolobus islandicus).